The chain runs to 245 residues: Carboxy-S-adenosyl-L-methionine synthase (245 aa).

Residues tyrosine 42, 67 to 69 (GCS), 92 to 93 (DN), 120 to 121 (DI), asparagine 135, and arginine 202 each bind S-adenosyl-L-methionine.

This sequence belongs to the class I-like SAM-binding methyltransferase superfamily. Cx-SAM synthase family. As to quaternary structure, homodimer.

It carries out the reaction prephenate + S-adenosyl-L-methionine = carboxy-S-adenosyl-L-methionine + 3-phenylpyruvate + H2O. In terms of biological role, catalyzes the conversion of S-adenosyl-L-methionine (SAM) to carboxy-S-adenosyl-L-methionine (Cx-SAM). The polypeptide is Carboxy-S-adenosyl-L-methionine synthase (Vibrio vulnificus (strain YJ016)).